The chain runs to 901 residues: Envelope glycoprotein B (901 aa).

Residues 1–34 (MRPVRGIARSRILSCSWRGTWTSALTILYLGVYC) form the signal peptide. Over 35 to 736 (ESTTVTPTTV…GALVTFVTNP (702 aa)) the chain is Virion surface. N-linked (GlcNAc...) asparagine; by host glycosylation is found at Asn-53, Asn-60, and Asn-66. Cystine bridges form between Cys-84–Cys-533, Cys-101–Cys-489, Cys-174–Cys-239, and Cys-331–Cys-380. Residues 141 to 147 (SYKYVTY) are involved in fusion and/or binding to host membrane. A glycan (N-linked (GlcNAc...) asparagine; by host) is linked at Asn-197. The involved in fusion and/or binding to host membrane stretch occupies residues 226-233 (GSVWLYKE). Asn-270, Asn-289, Asn-328, Asn-372, Asn-398, Asn-406, Asn-436, Asn-537, Asn-571, and Asn-623 each carry an N-linked (GlcNAc...) asparagine; by host glycan. An intrachain disulfide couples Cys-559 to Cys-596. Hydrophobic membrane proximal region stretches follow at residues 683–734 (VERV…TFVT) and 714–734 (AVGA…TFVT). The chain crosses the membrane as a helical span at residues 737–757 (FGAFVVFLFCVGCITLVITVY). The Intravirion segment spans residues 758 to 901 (RRQRRAMQRP…KLNTEDDVHV (144 aa)). Disordered regions lie at residues 794-813 (GPEG…APYG) and 852-901 (DDKK…DVHV). Basic and acidic residues-rich tracts occupy residues 852-864 (DDKK…KSSK) and 872-883 (SETRRRPGIMDR). Residues 890-893 (YQKL) carry the Internalization motif motif.

This sequence belongs to the herpesviridae glycoprotein B family. As to quaternary structure, homotrimer; disulfide-linked. Binds to heparan sulfate proteoglycans. Interacts with gH/gL heterodimer. A proteolytic cleavage by host furin generates two subunits that remain linked by disulfide bonds.

It localises to the virion membrane. The protein resides in the host cell membrane. It is found in the host endosome membrane. The protein localises to the host Golgi apparatus membrane. In terms of biological role, envelope glycoprotein that forms spikes at the surface of virion envelope. Essential for the initial attachment to heparan sulfate moieties of the host cell surface proteoglycans. Involved in fusion of viral and cellular membranes leading to virus entry into the host cell. Following initial binding to its host receptors, membrane fusion is mediated by the fusion machinery composed at least of gB and the heterodimer gH/gL. May be involved in the fusion between the virion envelope and the outer nuclear membrane during virion egress. This Guinea pig cytomegalovirus (strain 22122) (GPCMV) protein is Envelope glycoprotein B.